Here is a 43-residue protein sequence, read N- to C-terminus: Potassium channel toxin gamma-KTx 4.5 (43 aa).

4 cysteine pairs are disulfide-bonded: Cys5/Cys23, Cys11/Cys34, Cys20/Cys39, and Cys24/Cys41.

It belongs to the ergtoxin family. Gamma-KTx 4 subfamily. In terms of tissue distribution, expressed by the venom gland.

It localises to the secreted. Functionally, reversibly blocks Kv11/ERG potassium channels. The chain is Potassium channel toxin gamma-KTx 4.5 from Centruroides exilicauda (Bark scorpion).